A 198-amino-acid chain; its full sequence is MKVTKADIVISAVKPEQYPDSDLPEIALAGRSNVGKSSFINKILNRKKLVRISSKPGKTQTLNFFLINEMMHFVDVPGYGYAKVSKTERAAWGRMIETYFTTRTQLDAAVLVVDLRHQPTKDDIMMYDFLKHYEIPTIIIATKADKIPKGKWQKHLKVVKETLAVEIGDEIVLFSSETGLGKEEAWKAIHKMTKTKNA.

An EngB-type G domain is found at 22–195; it reads DLPEIALAGR…WKAIHKMTKT (174 aa). GTP is bound by residues 30–37, 57–61, 75–78, 142–145, and 174–176; these read GRSNVGKS, GKTQT, DVPG, TKAD, and FSS. Positions 37 and 59 each coordinate Mg(2+).

It belongs to the TRAFAC class TrmE-Era-EngA-EngB-Septin-like GTPase superfamily. EngB GTPase family. Requires Mg(2+) as cofactor.

Its function is as follows. Necessary for normal cell division and for the maintenance of normal septation. This Bacillus mycoides (strain KBAB4) (Bacillus weihenstephanensis) protein is Probable GTP-binding protein EngB.